Here is a 47-residue protein sequence, read N- to C-terminus: Delta-stichotoxin-Hcr3a (47 aa).

Pro-3 carries the post-translational modification Hydroxyproline. 3 cysteine pairs are disulfide-bonded: Cys-4–Cys-44, Cys-6–Cys-34, and Cys-27–Cys-45.

Belongs to the sea anemone sodium channel inhibitory toxin family. Type I subfamily.

It is found in the secreted. The protein localises to the nematocyst. In terms of biological role, inhibits voltage-gated sodium channels (Nav). This chain is Delta-stichotoxin-Hcr3a, found in Radianthus crispa (Leathery sea anemone).